The chain runs to 226 residues: UPF0758 protein M28_Spy0816 (226 aa).

The region spanning 103-225 is the MPN domain; sequence SVLTSVQVAE…YYSFREKSTL (123 aa). Residues H174, H176, and D187 each contribute to the Zn(2+) site. A JAMM motif motif is present at residues 174-187; that stretch reads HNHPSGNIEPSSND.

The protein belongs to the UPF0758 family.

The chain is UPF0758 protein M28_Spy0816 from Streptococcus pyogenes serotype M28 (strain MGAS6180).